A 230-amino-acid chain; its full sequence is Translation initiation factor IF-3 (230 aa).

Disordered stretches follow at residues 1-21 and 184-230; these read MAIQHRDPRGGGGSRDARTNR and LQSQ…AAQR. Positions 193–208 are enriched in low complexity; that stretch reads AAAAAAPAAAPAAGAP. Over residues 209–220 the composition is skewed to pro residues; the sequence is APAPAPAAPAPA. The segment covering 221 to 230 has biased composition (low complexity); the sequence is PTAADPAAQR.

Belongs to the IF-3 family. In terms of assembly, monomer.

It localises to the cytoplasm. IF-3 binds to the 30S ribosomal subunit and shifts the equilibrium between 70S ribosomes and their 50S and 30S subunits in favor of the free subunits, thus enhancing the availability of 30S subunits on which protein synthesis initiation begins. This chain is Translation initiation factor IF-3, found in Anaeromyxobacter dehalogenans (strain 2CP-1 / ATCC BAA-258).